A 193-amino-acid polypeptide reads, in one-letter code: Orotate phosphoribosyltransferase (193 aa).

114-122 (EDVITTGGS) serves as a coordination point for 5-phospho-alpha-D-ribose 1-diphosphate. Orotate contacts are provided by threonine 118 and arginine 146.

It belongs to the purine/pyrimidine phosphoribosyltransferase family. PyrE subfamily. In terms of assembly, homodimer. Mg(2+) is required as a cofactor.

It catalyses the reaction orotidine 5'-phosphate + diphosphate = orotate + 5-phospho-alpha-D-ribose 1-diphosphate. The protein operates within pyrimidine metabolism; UMP biosynthesis via de novo pathway; UMP from orotate: step 1/2. Its function is as follows. Catalyzes the transfer of a ribosyl phosphate group from 5-phosphoribose 1-diphosphate to orotate, leading to the formation of orotidine monophosphate (OMP). The sequence is that of Orotate phosphoribosyltransferase from Chlorobium phaeobacteroides (strain BS1).